Here is a 165-residue protein sequence, read N- to C-terminus: Large ribosomal subunit protein uL10 (165 aa).

An N6-acetyllysine mark is found at Lys-37 and Lys-105.

The protein belongs to the universal ribosomal protein uL10 family. As to quaternary structure, part of the ribosomal stalk of the 50S ribosomal subunit. The N-terminus interacts with L11 and the large rRNA to form the base of the stalk. The C-terminus forms an elongated spine to which L12 dimers bind in a sequential fashion forming a multimeric L10(L12)X complex.

In terms of biological role, protein L10 is also a translational repressor protein. It controls the translation of the rplJL-rpoBC operon by binding to its mRNA. Its function is as follows. Forms part of the ribosomal stalk, playing a central role in the interaction of the ribosome with GTP-bound translation factors. In Escherichia coli O6:H1 (strain CFT073 / ATCC 700928 / UPEC), this protein is Large ribosomal subunit protein uL10 (rplJ).